Reading from the N-terminus, the 346-residue chain is Annexin A1 (346 aa).

An N-acetylalanine modification is found at Ala2. Residue Ser5 is modified to Phosphoserine; by TRPM7. Gln19 participates in a covalent cross-link: Isoglutamyl lysine isopeptide (Gln-Lys) (interchain with K-?). At Tyr21 the chain carries Phosphotyrosine; by EGFR. Residue Ser27 is modified to Phosphoserine; by PKC. 2 positions are modified to phosphoserine: Ser34 and Ser37. Thr41 carries the phosphothreonine modification. Annexin repeat units follow at residues 42-113, 114-185, 197-269, and 273-344; these read FNPS…ALLK, TPAQ…SLAK, DLAD…AIVK, and SKPA…ALCG. Lys58 bears the N6-acetyllysine mark. Ca(2+) contacts are provided by Gly59, Val60, Glu62, Lys97, Leu100, Glu105, Met127, Gly129, Gly131, Thr132, and Glu134. Thr136 carries the post-translational modification Phosphothreonine. Ca(2+)-binding residues include Asp171, Gly210, and Arg213. Lys214 is covalently cross-linked (Glycyl lysine isopeptide (Lys-Gly) (interchain with G-Cter in SUMO1); alternate). Lys214 is covalently cross-linked (Glycyl lysine isopeptide (Lys-Gly) (interchain with G-Cter in SUMO2); alternate). Gly215 contacts Ca(2+). At Lys239 the chain carries N6-acetyllysine. Ca(2+)-binding residues include Asp253, Glu255, and Leu256. Lys257 is covalently cross-linked (Glycyl lysine isopeptide (Lys-Gly) (interchain with G-Cter in SUMO1)). Residues Glu261, Met286, Gly288, and Gly290 each contribute to the Ca(2+) site. Lys312 carries the N6-acetyllysine modification. Cys324 and Cys343 form a disulfide bridge. Ca(2+) contacts are provided by Leu328, Glu330, and Thr331. Residue Lys332 forms a Glycyl lysine isopeptide (Lys-Gly) (interchain with G-Cter in SUMO1) linkage. Glu336 is a binding site for Ca(2+).

The protein belongs to the annexin family. In terms of assembly, homodimer; non-covalently linked. Homodimer; linked by transglutamylation. Homodimers linked by transglutamylation are observed in placenta, but not in other tissues. Interacts with S100A11. Heterotetramer, formed by two molecules each of S100A11 and ANXA1. Interacts with DYSF. Interacts with EGFR. Post-translationally, phosphorylated by protein kinase C, EGFR and TRPM7. Phosphorylated in response to EGF treatment. Sumoylated. In terms of processing, proteolytically cleaved by cathepsin CTSG to release the active N-terminal peptide Ac2-26. In terms of tissue distribution, detected in resting neutrophils. Detected in peripheral blood T-cells. Detected in extracellular vesicles in blood serum from patients with inflammatory bowel disease, but not in serum from healthy donors. Detected in placenta (at protein level). Detected in liver.

Its subcellular location is the nucleus. It localises to the cytoplasm. It is found in the cell projection. The protein resides in the cilium. The protein localises to the cell membrane. Its subcellular location is the membrane. It localises to the endosome membrane. It is found in the basolateral cell membrane. The protein resides in the apical cell membrane. The protein localises to the lateral cell membrane. Its subcellular location is the secreted. It localises to the extracellular space. It is found in the extracellular exosome. The protein resides in the cytoplasmic vesicle. The protein localises to the secretory vesicle lumen. Its subcellular location is the phagocytic cup. It localises to the early endosome. It is found in the cytoplasmic vesicle membrane. Plays important roles in the innate immune response as effector of glucocorticoid-mediated responses and regulator of the inflammatory process. Has anti-inflammatory activity. Plays a role in glucocorticoid-mediated down-regulation of the early phase of the inflammatory response. Contributes to the adaptive immune response by enhancing signaling cascades that are triggered by T-cell activation, regulates differentiation and proliferation of activated T-cells. Promotes the differentiation of T-cells into Th1 cells and negatively regulates differentiation into Th2 cells. Has no effect on unstimulated T cells. Negatively regulates hormone exocytosis via activation of the formyl peptide receptors and reorganization of the actin cytoskeleton. Has high affinity for Ca(2+) and can bind up to eight Ca(2+) ions. Displays Ca(2+)-dependent binding to phospholipid membranes. Plays a role in the formation of phagocytic cups and phagosomes. Plays a role in phagocytosis by mediating the Ca(2+)-dependent interaction between phagosomes and the actin cytoskeleton. Its function is as follows. Functions at least in part by activating the formyl peptide receptors and downstream signaling cascades. Promotes chemotaxis of granulocytes and monocytes via activation of the formyl peptide receptors. Promotes rearrangement of the actin cytoskeleton, cell polarization and cell migration. Promotes resolution of inflammation and wound healing. Acts via neutrophil N-formyl peptide receptors to enhance the release of CXCL2. This Homo sapiens (Human) protein is Annexin A1 (ANXA1).